Reading from the N-terminus, the 63-residue chain is Large ribosomal subunit protein uL30 (63 aa).

It belongs to the universal ribosomal protein uL30 family. Part of the 50S ribosomal subunit.

The protein is Large ribosomal subunit protein uL30 of Coxiella burnetii (strain CbuK_Q154) (Coxiella burnetii (strain Q154)).